The chain runs to 200 residues: Recombination protein RecR (200 aa).

The segment at 58 to 75 (CSTCFCLKNLPESNCEFC) adopts a C4-type zinc-finger fold. In terms of domain architecture, Toprim spans 82–177 (STLCIVATPK…SISRLALGLP (96 aa)).

Belongs to the RecR family.

In terms of biological role, may play a role in DNA repair. It seems to be involved in an RecBC-independent recombinational process of DNA repair. It may act with RecF and RecO. In Chlamydia caviae (strain ATCC VR-813 / DSM 19441 / 03DC25 / GPIC) (Chlamydophila caviae), this protein is Recombination protein RecR.